The sequence spans 56 residues: MAVPKRKKSRSTTRHRRAQWKTTPTQLVEIRVEGKVLRVPRNLVKAYHSGLIDVED.

Residues 1–19 (MAVPKRKKSRSTTRHRRAQ) are compositionally biased toward basic residues. Positions 1-22 (MAVPKRKKSRSTTRHRRAQWKT) are disordered.

This sequence belongs to the bacterial ribosomal protein bL32 family.

The polypeptide is Large ribosomal subunit protein bL32 (Cutibacterium acnes (strain DSM 16379 / KPA171202) (Propionibacterium acnes)).